The following is a 124-amino-acid chain: Astakine (124 aa).

The first 21 residues, 1–21 (MAVSSAVRMLSVACLVVSAAG), serve as a signal peptide directing secretion. 5 disulfides stabilise this stretch: Cys28-Cys40, Cys34-Cys52, Cys39-Cys91, Cys62-Cys99, and Cys93-Cys106.

It belongs to the AVIT (prokineticin) family.

Its subcellular location is the secreted. Functionally, cytokine directly involved in hematopoiesis. This is Astakine from Penaeus monodon (Giant tiger prawn).